Reading from the N-terminus, the 156-residue chain is Small ribosomal subunit protein uS7 (156 aa).

It belongs to the universal ribosomal protein uS7 family. In terms of assembly, part of the 30S ribosomal subunit. Contacts proteins S9 and S11.

Its function is as follows. One of the primary rRNA binding proteins, it binds directly to 16S rRNA where it nucleates assembly of the head domain of the 30S subunit. Is located at the subunit interface close to the decoding center, probably blocks exit of the E-site tRNA. The polypeptide is Small ribosomal subunit protein uS7 (Bacillus mycoides (strain KBAB4) (Bacillus weihenstephanensis)).